We begin with the raw amino-acid sequence, 572 residues long: O-fucosyltransferase 16 (572 aa).

A helical; Signal-anchor for type II membrane protein membrane pass occupies residues Leu17 to Phe37. N-linked (GlcNAc...) asparagine glycosylation is found at Asn92 and Asn136. Residue His274–Arg276 participates in substrate binding. N-linked (GlcNAc...) asparagine glycans are attached at residues Asn446 and Asn506. Residues Glu498 to Asp572 are disordered. Residues Asp521–Asp541 are compositionally biased toward acidic residues. Asn549 carries N-linked (GlcNAc...) asparagine glycosylation. Acidic residues predominate over residues Asp554–Leu566.

It belongs to the glycosyltransferase GT106 family.

It is found in the membrane. Its pathway is glycan metabolism. The protein is O-fucosyltransferase 16 of Arabidopsis thaliana (Mouse-ear cress).